The following is a 139-amino-acid chain: Thioredoxin H-type (139 aa).

In terms of domain architecture, Thioredoxin spans 20-132; the sequence is ELAGGNVHLI…LHKKITAILD (113 aa). Active-site nucleophile residues include C58 and C61. An intrachain disulfide couples C58 to C61.

The protein resides in the cytoplasm. Its function is as follows. Participates in various redox reactions through the reversible oxidation of the active center dithiol to a disulfide. The H form is known to activate a number of cytosolic enzymes. The sequence is that of Thioredoxin H-type from Populus jackii (Balm of Gilead).